The sequence spans 121 residues: Large ribosomal subunit protein bL12 (121 aa).

Belongs to the bacterial ribosomal protein bL12 family. Homodimer. Part of the ribosomal stalk of the 50S ribosomal subunit. Forms a multimeric L10(L12)X complex, where L10 forms an elongated spine to which 2 to 4 L12 dimers bind in a sequential fashion. Binds GTP-bound translation factors.

Functionally, forms part of the ribosomal stalk which helps the ribosome interact with GTP-bound translation factors. Is thus essential for accurate translation. The sequence is that of Large ribosomal subunit protein bL12 from Pectobacterium carotovorum subsp. carotovorum (strain PC1).